Reading from the N-terminus, the 397-residue chain is Mannonate dehydratase (397 aa).

Belongs to the mannonate dehydratase family. Fe(2+) serves as cofactor. Requires Mn(2+) as cofactor.

The enzyme catalyses D-mannonate = 2-dehydro-3-deoxy-D-gluconate + H2O. The protein operates within carbohydrate metabolism; pentose and glucuronate interconversion. In terms of biological role, catalyzes the dehydration of D-mannonate. This is Mannonate dehydratase from Saccharophagus degradans (strain 2-40 / ATCC 43961 / DSM 17024).